The primary structure comprises 926 residues: Alpha-aminoadipic semialdehyde synthase, mitochondrial (926 aa).

The N-terminal 27 residues, 1 to 27 (MLRAQRLRLARLRACVSRGLHHKPVMA), are a transit peptide targeting the mitochondrion. Positions 28–455 (LRREDVNAWE…DAVITSNGLL (428 aa)) are lysine-ketoglutarate reductase. 3 positions are modified to N6-acetyllysine: Lys-48, Lys-52, and Lys-56. Lys-93 bears the N6-acetyllysine; alternate mark. At Lys-93 the chain carries N6-succinyllysine; alternate. At Lys-128 the chain carries N6-acetyllysine. The residue at position 138 (Lys-138) is an N6-acetyllysine; alternate. An N6-succinyllysine; alternate modification is found at Lys-138. Position 274 is an N6-succinyllysine (Lys-274). The residue at position 286 (Lys-286) is an N6-acetyllysine; alternate. Lys-286 bears the N6-succinyllysine; alternate mark. The residue at position 333 (Lys-333) is an N6-succinyllysine. Lys-458 bears the N6-acetyllysine; alternate mark. At Lys-458 the chain carries N6-succinyllysine; alternate. The tract at residues 477–926 (MSTKKKVLVL…VFNTQSTIKL (450 aa)) is saccharopine dehydrogenase. Positions 488, 512, and 516 each coordinate NAD(+). N6-acetyllysine; alternate is present on residues Lys-523 and Lys-535. An N6-succinyllysine; alternate mark is found at Lys-523 and Lys-535. NAD(+) contacts are provided by Leu-554, Ala-576, and Ser-577. An L-saccharopine-binding site is contributed by 577–578 (SY). An N6-acetyllysine; alternate modification is found at Lys-584. N6-succinyllysine; alternate is present on Lys-584. NAD(+) is bound by residues Leu-603, Asp-604, and Pro-605. Asp-604 serves as a coordination point for L-saccharopine. Residue Arg-703 coordinates L-saccharopine. Lys-707 is subject to N6-acetyllysine. 724–726 (TLR) lines the L-saccharopine pocket. Position 732 is an N6-succinyllysine (Lys-732). An N6-acetyllysine modification is found at Lys-739. Lys-761 bears the N6-acetyllysine; alternate mark. At Lys-761 the chain carries N6-succinyllysine; alternate. Residues Lys-778 and Lys-780 each carry the N6-acetyllysine modification.

The protein in the N-terminal section; belongs to the AlaDH/PNT family. It in the C-terminal section; belongs to the saccharopine dehydrogenase family. As to quaternary structure, homotetramer.

It localises to the mitochondrion. The catalysed reaction is L-saccharopine + NADP(+) + H2O = L-lysine + 2-oxoglutarate + NADPH + H(+). The enzyme catalyses L-saccharopine + NAD(+) + H2O = (S)-2-amino-6-oxohexanoate + L-glutamate + NADH + H(+). It functions in the pathway amino-acid degradation; L-lysine degradation via saccharopine pathway; glutaryl-CoA from L-lysine: step 1/6. It participates in amino-acid degradation; L-lysine degradation via saccharopine pathway; glutaryl-CoA from L-lysine: step 2/6. Functionally, bifunctional enzyme that catalyzes the first two steps in lysine degradation. The polypeptide is Alpha-aminoadipic semialdehyde synthase, mitochondrial (Rattus norvegicus (Rat)).